The chain runs to 273 residues: Proteasome subunit beta type-5-B (273 aa).

The propeptide at 1-57 (MKLDTSGLETTMPVIGFGSNSEMLDGFSSAPSFDLPRTTDFDGFQKKAVEMVKPAKG) is removed in mature form. T58 acts as the Nucleophile in catalysis.

It belongs to the peptidase T1B family. In terms of assembly, component of the 20S core complex of the 26S proteasome. The 26S proteasome is composed of a core protease (CP), known as the 20S proteasome, capped at one or both ends by the 19S regulatory particle (RP/PA700). The 20S proteasome core is composed of 28 subunits that are arranged in four stacked rings, resulting in a barrel-shaped structure. The two end rings are each formed by seven alpha subunits, and the two central rings are each formed by seven beta subunits. The catalytic chamber with the active sites is on the inside of the barrel.

It is found in the cytoplasm. It localises to the nucleus. The enzyme catalyses Cleavage of peptide bonds with very broad specificity.. In terms of biological role, the proteasome is a multicatalytic proteinase complex which is characterized by its ability to cleave peptides with Arg, Phe, Tyr, Leu, and Glu adjacent to the leaving group at neutral or slightly basic pH. The proteasome has an ATP-dependent proteolytic activity. This chain is Proteasome subunit beta type-5-B (PBE2), found in Arabidopsis thaliana (Mouse-ear cress).